A 168-amino-acid polypeptide reads, in one-letter code: Chorismate pyruvate-lyase (168 aa).

Positions 36, 78, 116, and 157 each coordinate substrate.

The protein belongs to the UbiC family. Monomer.

Its subcellular location is the cytoplasm. It carries out the reaction chorismate = 4-hydroxybenzoate + pyruvate. The protein operates within cofactor biosynthesis; ubiquinone biosynthesis. In terms of biological role, removes the pyruvyl group from chorismate, with concomitant aromatization of the ring, to provide 4-hydroxybenzoate (4HB) for the ubiquinone pathway. This is Chorismate pyruvate-lyase from Yersinia enterocolitica serotype O:8 / biotype 1B (strain NCTC 13174 / 8081).